The following is a 165-amino-acid chain: Lithostathine (165 aa).

The first 21 residues, 1–21 (MTRNKYFILLSCLMVLSPSQG), serve as a signal peptide directing secretion. Residue Q22 is modified to Pyrrolidone carboxylic acid. A C-type lectin domain is found at 33 to 163 (ITCPEGSNAY…DAQLSFVCKF (131 aa)). Disulfide bonds link C35-C46, C63-C161, and C136-C153. A glycan (N-linked (GlcNAc...) asparagine) is linked at N129.

As to expression, expressed only in regenerating islets, but not in normal pancreatic islets, insulinomas or regenerating liver.

Its subcellular location is the secreted. Its function is as follows. Might act as an inhibitor of spontaneous calcium carbonate precipitation. The protein is Lithostathine (Reg1) of Rattus norvegicus (Rat).